The primary structure comprises 133 residues: MAPNDIISDMLTRIRNACAVRHPTTVVPTTKMTRSIAQVLKEEGFIEGFEEVGEGVKKHLVISLKYKSRGRQPIINTLQRVSKPGLRVYSNRKDLPRVLGGIGIAIISTSKGIMTDREARRQNVGGEVLCYVW.

The protein belongs to the universal ribosomal protein uS8 family. In terms of assembly, part of the 30S ribosomal subunit. Contacts proteins S5 and S12.

Its function is as follows. One of the primary rRNA binding proteins, it binds directly to 16S rRNA central domain where it helps coordinate assembly of the platform of the 30S subunit. This chain is Small ribosomal subunit protein uS8, found in Crocosphaera subtropica (strain ATCC 51142 / BH68) (Cyanothece sp. (strain ATCC 51142)).